We begin with the raw amino-acid sequence, 198 residues long: Protein XA-1 (198 aa).

An N-terminal signal peptide occupies residues 1–18; that stretch reads MFFYVLLLALMAQGWSLP. A disordered region spans residues 17 to 198; the sequence is LPQGKTGEDS…KHGQEQGKKH (182 aa). The span at 29–44 shows a compositional bias: pro residues; the sequence is FRPPSPPMGPSLPPPV. Residues 46–59 are compositionally biased toward basic and acidic residues; sequence HDLHRPSGHPEEFR. Residues 76–86 show a composition bias toward basic residues; that stretch reads GRPKRDLHHGK. Positions 95 to 104 are enriched in basic and acidic residues; it reads HTGEVLHHTD. Basic residues predominate over residues 134 to 145; it reads HGRHRRDLHHGK. Basic and acidic residues predominate over residues 181-198; sequence NSSEEKRPKHGQEQGKKH.

As to expression, expressed in the periphery of the cement gland as well as in the region of the hatching gland.

Its subcellular location is the secreted. The polypeptide is Protein XA-1 (Xenopus laevis (African clawed frog)).